Here is a 252-residue protein sequence, read N- to C-terminus: MGRGRVEMKRIENKINRQVTFSKRRNGLLKKAYELSVLCDAEVALIIFSSRGKLYEFGSVGIESTIERYNRCYNCSLSNNKPEETTQSWCQEVTKLKSKYESLVRTNRNLLGEDLGEMGVKELQALERQLEAALTATRQRKTQVMMEEMEDLRKKERQLGDINKQLKIKFETEGHAFKTFQDLWANSAASVAGDPNNSEFPVEPSHPNVLDCNTEPFLQIGFQQHYYVQGEGSSVSKSNVAGETNFVQGWVL.

Positions arginine 3–phenylalanine 57 constitute an MADS-box domain. The K-box domain maps to threonine 86–alanine 176. Residues glutamine 91–glutamate 173 adopt a coiled-coil conformation.

As to quaternary structure, forms a heterodimer with AGAMOUS. Interacts with AGL15 and AGL16. As to expression, preferentially expressed in flowers.

It is found in the nucleus. Functionally, probable transcription factor. Forms a heterodimer via the K-box domain with AG, that could be involved in genes regulation during floral meristem development. The polypeptide is Agamous-like MADS-box protein AGL6 (AGL6) (Arabidopsis thaliana (Mouse-ear cress)).